The primary structure comprises 198 residues: Peptidyl-tRNA hydrolase (198 aa).

Tyr17 contributes to the tRNA binding site. The active-site Proton acceptor is His22. TRNA-binding residues include Tyr74, Asn76, and Asn122.

This sequence belongs to the PTH family. Monomer.

It localises to the cytoplasm. It catalyses the reaction an N-acyl-L-alpha-aminoacyl-tRNA + H2O = an N-acyl-L-amino acid + a tRNA + H(+). In terms of biological role, hydrolyzes ribosome-free peptidyl-tRNAs (with 1 or more amino acids incorporated), which drop off the ribosome during protein synthesis, or as a result of ribosome stalling. Its function is as follows. Catalyzes the release of premature peptidyl moieties from peptidyl-tRNA molecules trapped in stalled 50S ribosomal subunits, and thus maintains levels of free tRNAs and 50S ribosomes. This Kineococcus radiotolerans (strain ATCC BAA-149 / DSM 14245 / SRS30216) protein is Peptidyl-tRNA hydrolase.